A 648-amino-acid chain; its full sequence is Zinc finger protein 202 (648 aa).

Lys22 is covalently cross-linked (Glycyl lysine isopeptide (Lys-Gly) (interchain with G-Cter in SUMO2)). One can recognise an SCAN box domain in the interval 46 to 127 (HQNFRRFRYQ…VTLVEGLQKQ (82 aa)). Residues 146-221 (SEETVHLGVE…PDLPAERSSG (76 aa)) are disordered. Positions 165-182 (PVQSSTPEQSPEETTQSP) are enriched in polar residues. The KRAB domain occupies 237-308 (VTFKDVAVCF…DIQEPQETQE (72 aa)). C2H2-type zinc fingers lie at residues 397 to 419 (HDCS…LRTH) and 425 to 447 (YKCM…QKVH). Residues Lys454 and Lys460 each participate in a glycyl lysine isopeptide (Lys-Gly) (interchain with G-Cter in SUMO2) cross-link. A Phosphoserine modification is found at Ser466. A C2H2-type 3 zinc finger spans residues 481-503 (YRCDDCGKHFRWTSDLVRHQRTH). Glycyl lysine isopeptide (Lys-Gly) (interchain with G-Cter in SUMO2) cross-links involve residues Lys507 and Lys521. C2H2-type zinc fingers lie at residues 509–531 (FFCT…QRIH), 537–559 (YLCG…RKTH), 565–587 (YLCS…LRGH), 593–615 (CRCN…QRTH), and 621–643 (FTCP…QRTH).

As to quaternary structure, interacts with SDP1. As to expression, highly expressed in testis. Also expressed in breast carcinoma cell lines.

The protein resides in the nucleus. Functionally, transcriptional repressor that binds to elements found predominantly in genes that participate in lipid metabolism. Among its targets are structural components of lipoprotein particles (apolipoproteins AIV, CIII, and E), enzymes involved in lipid processing (lipoprotein lipase, lecithin cholesteryl ester transferase), transporters involved in lipid homeostasis (ABCA1, ABCG1), and several genes involved in processes related to energy metabolism and vascular disease. In Homo sapiens (Human), this protein is Zinc finger protein 202 (ZNF202).